We begin with the raw amino-acid sequence, 660 residues long: Threonine--tRNA ligase (660 aa).

A TGS domain is found at 1 to 64 (MSHSVSLTFP…TEGRIEIVTR (64 aa)). Residues 245-547 (DHRRLGREMD…LLENFAGHMP (303 aa)) are catalytic. Cys-341, His-392, and His-524 together coordinate Zn(2+).

It belongs to the class-II aminoacyl-tRNA synthetase family. Homodimer. It depends on Zn(2+) as a cofactor.

Its subcellular location is the cytoplasm. The enzyme catalyses tRNA(Thr) + L-threonine + ATP = L-threonyl-tRNA(Thr) + AMP + diphosphate + H(+). Functionally, catalyzes the attachment of threonine to tRNA(Thr) in a two-step reaction: L-threonine is first activated by ATP to form Thr-AMP and then transferred to the acceptor end of tRNA(Thr). Also edits incorrectly charged L-seryl-tRNA(Thr). The sequence is that of Threonine--tRNA ligase from Sinorhizobium medicae (strain WSM419) (Ensifer medicae).